The sequence spans 183 residues: Shikimate kinase (183 aa).

Gly-14 to Thr-19 provides a ligand contact to ATP. Residue Thr-18 coordinates Mg(2+). 3 residues coordinate substrate: Asp-36, Arg-60, and Gly-82. Arg-120 serves as a coordination point for ATP. Residue Arg-139 participates in substrate binding. Position 156 (Gln-156) interacts with ATP.

The protein belongs to the shikimate kinase family. As to quaternary structure, monomer. Mg(2+) serves as cofactor.

The protein localises to the cytoplasm. It catalyses the reaction shikimate + ATP = 3-phosphoshikimate + ADP + H(+). The protein operates within metabolic intermediate biosynthesis; chorismate biosynthesis; chorismate from D-erythrose 4-phosphate and phosphoenolpyruvate: step 5/7. Functionally, catalyzes the specific phosphorylation of the 3-hydroxyl group of shikimic acid using ATP as a cosubstrate. This Thiobacillus denitrificans (strain ATCC 25259 / T1) protein is Shikimate kinase.